We begin with the raw amino-acid sequence, 178 residues long: Platelet inhibitor triplatin-2 (178 aa).

A signal peptide spans 1-18; sequence MKMIISLTFLGILMLAFA. 3 cysteine pairs are disulfide-bonded: Cys-25-Cys-134, Cys-60-Cys-178, and Cys-90-Cys-106.

Belongs to the calycin superfamily. Triabin family. In terms of tissue distribution, expressed in salivary glands.

The protein localises to the secreted. Functionally, inhibits platelet aggregation and vasoconstriction through binding to distinct eicosanoids involved in inflammation (acts as a scavenger), and has a role in inhibiting host innate immunity by impairing platelet-assisted formation of neutrophil extracellular traps (NETs). Inhibits platelet aggregation by collagen, and low doses of thromboxane A2 mimetic (TXA2 mimetic), and arachidonic acid (AA) without affecting aggregation induced by ADP, convulxin (GP6 agonist), and PMA. Binds to TXA2, TXB2, prostaglandine H2 mimetic (PGH2 mimetic), PGJ2, and PGF2alpha. Binding is not observed to leukotrienes, AA, and biogenic amines (PGE1, 5(S)-HETE, 12(S)-HETE, 20-HETE, norepinephrine, epinephrine, serotonin, LTC4 and ADP). Induces relaxation of aorta rat previously contracted with TXA2 mimetic. Moreover, it also impairs platelet-assisted formation of neutrophil extracellular traps (NETs). NETs are web-like structures of DNA and proteins that play an important role in killing of pathogens. In addition, NETs are implicated in thrombus formation. In vivo, this protein exhibits antithrombotic activity in two distinct mice models that are highly dependent on platelets. It is noteworthy that it inhibits thrombosis without promoting excessive bleeding. In Triatoma infestans (Assassin bug), this protein is Platelet inhibitor triplatin-2.